The following is a 1652-amino-acid chain: Venom factor (1652 aa).

Residues 1–22 (MEGMALYLVAALLIGFPASSFG) form the signal peptide. The Mg(2+) site is built by Pro519, Asp542, Val543, and Asp545. 12 cysteine pairs are disulfide-bonded: Cys547/Cys808, Cys616/Cys651, Cys684/Cys711, Cys685/Cys718, Cys698/Cys719, Cys864/Cys1502, Cys1347/Cys1478, Cys1378/Cys1447, Cys1495/Cys1500, Cys1507/Cys1579, Cys1526/Cys1650, and Cys1626/Cys1635. The propeptide occupies 657-740 (RRRRRSVVLL…REDELFLARS (84 aa)). Residues 661 to 739 (RSVVLLDSKA…KREDELFLAR (79 aa)) form a C3a-like domain region. In terms of domain architecture, Anaphylatoxin-like spans 684-719 (CCEDGMHENPMGYSCEKREKYIQEGDACKAAFLECC). A factor B binding site region spans residues 743–754 (EDEFFGEDNIIS). The propeptide occupies 992–1270 (HLIITPSGCG…VVGFQGLAEY (279 aa)). The interval 992 to 1270 (HLIITPSGCG…VVGFQGLAEY (279 aa)) is C3d-like domain. The segment at residues 1000–1003 (CGEQ) is a cross-link (isoglutamyl cysteine thioester (Cys-Gln)). The tract at residues 1197–1260 (VLMAASTERN…GGTYGQTQAT (64 aa)) is factor H binding site. The 144-residue stretch at 1507–1650 (CSLLNQQKKI…LSNTLTIFGC (144 aa)) folds into the NTR domain.

It belongs to the venom complement C3 homolog family. As to quaternary structure, heterotrimer of alpha, beta and gamma chains; disulfide-linked. Is active with factor B in the presence of factor D. In terms of processing, first processed by the removal of 4 Arg residues by furin-type protease, forming two chains, alpha and gamma/beta precursor, linked by a disulfide bond. Probably, a cobrin-like protease cleaves the C3a-like domain and then the C3d-like domain, generating the mature venom factor (VF). As to expression, expressed by the venom gland.

The protein localises to the secreted. Complement-activating protein in venom. It is a structural and functional analog of complement component C3b, the activated form of C3. It binds factor B (CFB), which is subsequently cleaved by factor D (CFD) to form the bimolecular complex VF/Bb. VF/Bb is a C3/C5 convertase that cleaves both complement components C3 and C5. Structurally, it resembles the C3b degradation product C3c, which is not able to form a C3/C5 convertase. Unlike C3b/Bb, VF/Bb is a stable complex and completely resistant to the actions of complement regulatory factors H (CFH) and I (CFI). Therefore, VF continuously activates complement resulting in the depletion of complement activity. This is Venom factor from Crotalus adamanteus (Eastern diamondback rattlesnake).